The sequence spans 350 residues: Phosphotriesterase-related protein (350 aa).

A divalent metal cation-binding residues include histidine 22, histidine 24, glutamate 169, histidine 201, histidine 230, and aspartate 298.

This sequence belongs to the metallo-dependent hydrolases superfamily. Phosphotriesterase family. The cofactor is a divalent metal cation.

This Drosophila yakuba (Fruit fly) protein is Phosphotriesterase-related protein.